The primary structure comprises 256 residues: 5'-nucleotidase SurE (256 aa).

4 residues coordinate a divalent metal cation: aspartate 8, aspartate 9, serine 40, and asparagine 94.

It belongs to the SurE nucleotidase family. A divalent metal cation serves as cofactor.

Its subcellular location is the cytoplasm. It carries out the reaction a ribonucleoside 5'-phosphate + H2O = a ribonucleoside + phosphate. In terms of biological role, nucleotidase that shows phosphatase activity on nucleoside 5'-monophosphates. The sequence is that of 5'-nucleotidase SurE from Wolbachia pipientis subsp. Culex pipiens (strain wPip).